The sequence spans 190 residues: Small ribosomal subunit protein uS5 (190 aa).

One can recognise an S5 DRBM domain in the interval 22 to 85 (FVDKLVHINR…ESAKRNLTRV (64 aa)).

Belongs to the universal ribosomal protein uS5 family. In terms of assembly, part of the 30S ribosomal subunit. Contacts proteins S4 and S8.

In terms of biological role, with S4 and S12 plays an important role in translational accuracy. Located at the back of the 30S subunit body where it stabilizes the conformation of the head with respect to the body. In Rhodopseudomonas palustris (strain BisB18), this protein is Small ribosomal subunit protein uS5.